We begin with the raw amino-acid sequence, 139 residues long: Actin-depolymerizing factor 1 (139 aa).

One can recognise an ADF-H domain in the interval 5-139; the sequence is ASGMAVHDDC…GLDVIQSRAN (135 aa).

Belongs to the actin-binding proteins ADF family.

Its function is as follows. Actin-depolymerizing protein. Severs actin filaments (F-actin) and binds to actin monomers. This Petunia hybrida (Petunia) protein is Actin-depolymerizing factor 1 (ADF1).